The primary structure comprises 397 residues: Staphylopine export protein (397 aa).

Helical transmembrane passes span 12–32, 38–58, 77–97, 102–122, 134–154, 158–178, 217–237, 239–259, 285–305, 309–329, 337–357, and 363–383; these read LYILTLMFFSANAILNVFIPL, GATNTVIGIVMGAYMLTAMVF, IILIINAIALIIYGFTGLEGY, VMQGVCTAFFSMSLQLGIIDA, LYSLFSTIPNLIGPLVAVGIW, NISLFAIVIIFIALTTTFFGY, GIIMIVASIVFGAVSTFVPLY, VSLGFANAGIFLTIQAIAVVA, LLVIASFVVAFGPQVGAIIFY, ILIGMTQAMVYPTLTSYLSFV, MLLGLFIACADLGISLGGALM, and LVGFKWMYLICGMLVIVIMIM.

It belongs to the major facilitator superfamily.

The protein localises to the cell membrane. Involved in the export of the metallophore staphylopine. This chain is Staphylopine export protein, found in Staphylococcus aureus (strain Mu50 / ATCC 700699).